The chain runs to 128 residues: Holo-[acyl-carrier-protein] synthase (128 aa).

Mg(2+) contacts are provided by D8 and E60.

Belongs to the P-Pant transferase superfamily. AcpS family. Mg(2+) is required as a cofactor.

The protein localises to the cytoplasm. The enzyme catalyses apo-[ACP] + CoA = holo-[ACP] + adenosine 3',5'-bisphosphate + H(+). Transfers the 4'-phosphopantetheine moiety from coenzyme A to a Ser of acyl-carrier-protein. The sequence is that of Holo-[acyl-carrier-protein] synthase from Anaeromyxobacter dehalogenans (strain 2CP-1 / ATCC BAA-258).